The chain runs to 649 residues: DNA mismatch repair protein MutL (649 aa).

It belongs to the DNA mismatch repair MutL/HexB family.

Functionally, this protein is involved in the repair of mismatches in DNA. It is required for dam-dependent methyl-directed DNA mismatch repair. May act as a 'molecular matchmaker', a protein that promotes the formation of a stable complex between two or more DNA-binding proteins in an ATP-dependent manner without itself being part of a final effector complex. The protein is DNA mismatch repair protein MutL of Streptococcus pneumoniae (strain P1031).